A 469-amino-acid chain; its full sequence is 3-isopropylmalate dehydratase large subunit (469 aa).

[4Fe-4S] cluster contacts are provided by cysteine 347, cysteine 410, and cysteine 413.

It belongs to the aconitase/IPM isomerase family. LeuC type 1 subfamily. As to quaternary structure, heterodimer of LeuC and LeuD. The cofactor is [4Fe-4S] cluster.

The catalysed reaction is (2R,3S)-3-isopropylmalate = (2S)-2-isopropylmalate. The protein operates within amino-acid biosynthesis; L-leucine biosynthesis; L-leucine from 3-methyl-2-oxobutanoate: step 2/4. In terms of biological role, catalyzes the isomerization between 2-isopropylmalate and 3-isopropylmalate, via the formation of 2-isopropylmaleate. This Ralstonia nicotianae (strain ATCC BAA-1114 / GMI1000) (Ralstonia solanacearum) protein is 3-isopropylmalate dehydratase large subunit.